The chain runs to 161 residues: MSSFVTNGYLPVTLEPHELTLDIKTNIRNAVYKTYLHKEISGKMAKKIEICKDVELPLGEIVNNSVVINVPCVITYAYYHVGDIVRGTLNIEDESNVTIQCGDLICKLSRDSGTVSFSDSKYCFFRNGNAYDNGSEVSAVLMEAQQGTESSFVFLANIVDS.

It belongs to the poxviridae DNA-directed RNA polymerase 18 kDa subunit family. As to quaternary structure, the DNA-dependent RNA polymerase used for intermediate and late genes expression consists of eight subunits Rpo30/OPG66, Rpo7/OPG90, Rpo22/OPG103, Rpo147/OPG105, Rpo18/OPG119, Rpo19/OPG131, Rpo132/OPG151 and Rpo35/OPG156. The same holoenzyme, with the addition of the transcription-specificity factor OPG109, is used for early gene expression.

It localises to the virion. It catalyses the reaction RNA(n) + a ribonucleoside 5'-triphosphate = RNA(n+1) + diphosphate. Its function is as follows. Part of the DNA-dependent RNA polymerase which catalyzes the transcription of viral DNA into RNA using the four ribonucleoside triphosphates as substrates. Responsible for the transcription of early, intermediate and late genes. DNA-dependent RNA polymerase associates with the early transcription factor (ETF), itself composed of OPG118 and OPG133, thereby allowing the early genes transcription. Late transcription, and probably also intermediate transcription, require newly synthesized RNA polymerase. This chain is DNA-directed RNA polymerase 18 kDa subunit (OPG119), found in Homo sapiens (Human).